Reading from the N-terminus, the 5251-residue chain is Dynein heavy chain-like protein 2 (5251 aa).

Kelch repeat units follow at residues 37–87 (GLFL…CYHN), 95–143 (YVII…LQNG), 266–317 (SLIL…IHGN), 318–367 (NLFI…LVES), and 372–421 (IIFI…QNNE). The tract at residues 140–188 (LQNGINGTNEKGYISQTDDENCSDNKYGENQDYGSNDSDSKDGEDIDKD) is disordered. The interval 686-732 (NNIEQRNNNNDNNDNNNNDNNNNNNNDNNNNNNNNNNNNNNNNDNLN) is disordered. A compositionally biased stretch (low complexity) spans 692-730 (NNNNDNNDNNNNDNNNNNNNDNNNNNNNNNNNNNNNNDN). Coiled coils occupy residues 1155 to 1225 (DNII…KKIK) and 1544 to 1610 (KLNN…KLIS). A disordered region spans residues 1554 to 1598 (EKNKNANENSNEIETNKYNKKEELTNNRDGDGDDDDNIKNDKDEK). Over residues 1567-1583 (ETNKYNKKEELTNNRDG) the composition is skewed to basic and acidic residues. The stretch at 1639–1685 (HIKYTLKYYITNLFRLKDLFNNEKEKWIDENYLAQVFILCNTIFFVN) is one Kelch 6 repeat. The interval 1802–1825 (HQEGKQEYNNKNNDNDNNNNNNNN) is disordered. A compositionally biased stretch (low complexity) spans 1810 to 1825 (NNKNNDNDNNNNNNNN). ATP is bound at residue 1895–1902 (GPAGTGKT). Positions 2136-2188 (NDINENKKEKDNIEELKSDNVKEEKKTKKKHLEDNNNNKKKELFNLNNIEKEL) form a coiled coil. Positions 2152-2171 (KSDNVKEEKKTKKKHLEDNN) are disordered. Residue 2224–2231 (GEAGCGKT) participates in ATP binding. The stretch at 2447-2494 (VIWCFGGFLGEKDNVNYKKSFDKYWKNTFKSIKVNRKISVFDFYVENN) is one Kelch 7 repeat. Residues 2546-2553 (GKTGVGKT) and 2890-2897 (GIGGCGKT) contribute to the ATP site. Low complexity-rich tracts occupy residues 3138 to 3154 (DNNNNNNNNRDNIDGNN) and 3652 to 3671 (DQNFINNNNNNNSSNNNSTN). 6 disordered regions span residues 3138–3163 (DNNNNNNNNRDNIDGNNFFKNREGND), 3652–3686 (DQNFINNNNNNNSSNNNSTNFGYNEDPQKKDNHNN), 4042–4250 (EDND…EENV), 4280–4299 (NGKIDKDKEDDLEEEEDFEN), 4773–4824 (MDFH…ENEE), and 4910–4948 (KIIKKEKPGDNKDNKYTHDQKKETIHKEEDDEDEKHSGS). The span at 4059-4086 (KMEDEEKMEEEKVDEEKMEEEKVDEEKM) shows a compositional bias: acidic residues. Basic and acidic residues predominate over residues 4087 to 4247 (EDEKVEEKME…EKGEEQKAEE (161 aa)). Acidic residues-rich tracts occupy residues 4289–4299 (DDLEEEEDFEN) and 4807–4823 (DDDDESNNSNDNEEENE). The segment covering 4912 to 4937 (IKKEKPGDNKDNKYTHDQKKETIHKE) has biased composition (basic and acidic residues).

This sequence belongs to the dynein heavy chain family. In terms of assembly, consists of at least two heavy chains and a number of intermediate and light chains.

It localises to the cytoplasm. It is found in the cytoskeleton. In terms of biological role, acts as a motor for the intracellular retrograde motility of vesicles and organelles along microtubules. Dynein has ATPase activity; the force-producing power stroke is thought to occur on release of ADP. This is Dynein heavy chain-like protein 2 from Plasmodium falciparum (isolate 3D7).